The sequence spans 100 residues: Probable DNA-binding protein HU (100 aa).

This sequence belongs to the bacterial histone-like protein family.

Histone-like DNA-binding protein which is capable of wrapping DNA to stabilize it, and thus to prevent its denaturation under extreme environmental conditions. This is Probable DNA-binding protein HU (hup) from Chlamydia muridarum (strain MoPn / Nigg).